The sequence spans 199 residues: Casparian strip membrane protein 2 (199 aa).

Residues 1–37 (MMRGSTEIDMPESSSVSKGTAPLIAAPMKEKGGYKKG) are Cytoplasmic-facing. Residues 38–58 (IAIFDFILRLAAIATALAAAA) traverse the membrane as a helical segment. The Extracellular portion of the chain corresponds to 59–87 (SMGTSDETLPFFTQFFQFQASYDDLPTFQ). A helical membrane pass occupies residues 88 to 108 (FFVIAMAIVAGYLVLSLPFSI). The Cytoplasmic segment spans residues 109-120 (VAIVRPHAAGPR). The helical transmembrane segment at 121–141 (LLLIILDTVALTLNTAAGAAA) threads the bilayer. At 142 to 173 (AAIVYLAHNGNSSTNWLAICQQFGDFCQKNSG) the chain is on the extracellular side. An N-linked (GlcNAc...) asparagine glycan is attached at Asn152. The helical transmembrane segment at 174 to 194 (AVVASFITVVIFVFLLVLSAF) threads the bilayer. The Cytoplasmic segment spans residues 195–199 (ALRRH).

The protein belongs to the Casparian strip membrane proteins (CASP) family. As to quaternary structure, homodimer and heterodimers.

It localises to the cell membrane. Functionally, regulates membrane-cell wall junctions and localized cell wall deposition. Required for establishment of the Casparian strip membrane domain (CSD) and the subsequent formation of Casparian strips, a cell wall modification of the root endodermis that determines an apoplastic barrier between the intraorganismal apoplasm and the extraorganismal apoplasm and prevents lateral diffusion. The polypeptide is Casparian strip membrane protein 2 (Populus trichocarpa (Western balsam poplar)).